The chain runs to 431 residues: Evolutionarily conserved signaling intermediate in Toll pathway, mitochondrial (431 aa).

Residues Met-1–His-48 constitute a mitochondrion transit peptide. Residue Lys-372 forms a Glycyl lysine isopeptide (Lys-Gly) (interchain with G-Cter in ubiquitin) linkage. Residues Leu-400 to Ser-431 form a disordered region.

The protein belongs to the ECSIT family. Interacts with MAP3K1, SMAD4 and TRAF6. Interacts with SMAD1 only after BMP4-treatment. Part of the mitochondrial complex I assembly/MCIA complex that comprises at least the core subunits TMEM126B, NDUFAF1, ECSIT and ACAD9 and complement subunits such as COA1 and TMEM186. Interacts with NDUFAF1. Interacts with ACAD9. Interacts with TRIM59. Interacts with TMEM70 and TMEM242. Interacts (when ubiquitinated) with NF-kappa-B subunits RELA and NFKB1. Interacts with RIGI, IFIT1 and MAVS; these interactions promote RLR-mediated type I IFN induction. Interacts with SQSTM1; this interaction inhibits TLR4 signaling via functional regulation of the TRAF6-ECSIT complex. Interacts with cereblon/CRBN; this interaction inhibits the ubiquitination of ECSIT. In terms of processing, ubiquitinated on Lys-372; leading to translocation in the nucleus together with RELA and NFKB1 and expression of NF-kappa-B-dependent genes.

It is found in the cytoplasm. Its subcellular location is the nucleus. The protein resides in the mitochondrion. Functionally, adapter protein that plays a role in different signaling pathways including TLRs and IL-1 pathways or innate antiviral induction signaling. Plays a role in the activation of NF-kappa-B by forming a signal complex with TRAF6 and TAK1/MAP3K7 to activate TAK1/MAP3K7 leading to activation of IKKs. Once ubiquitinated, interacts with the dissociated RELA and NFKB1 proteins and translocates to the nucleus where it induces NF-kappa-B-dependent gene expression. Plays a role in innate antiviral immune response by bridging the pattern recognition receptors RIGI and MDA5/IFIT1 to the MAVS complex at the mitochondrion. Promotes proteolytic activation of MAP3K1. Involved in the BMP signaling pathway. Required for normal embryonic development. As part of the MCIA complex, involved in the assembly of the mitochondrial complex I. This chain is Evolutionarily conserved signaling intermediate in Toll pathway, mitochondrial, found in Homo sapiens (Human).